A 513-amino-acid chain; its full sequence is ETS translocation variant 3 (513 aa).

Positions 35 to 116 form a DNA-binding region, ETS; the sequence is IQLWHFILEL…KGKRFTYKFN (82 aa). Residues 138-202 are disordered; sequence QSAPPVPTAS…DLEDGSASDW (65 aa). 3 positions are modified to phosphoserine: Ser139, Ser159, and Ser315. Positions 333–513 are disordered; it reads QMHPEEPSQF…ATTATAAADA (181 aa). Basic and acidic residues-rich tracts occupy residues 357–366, 380–392, and 399–419; these read ERVESREEAV, IKVE…DPDS, and GKEE…EEGK. Lys381 is covalently cross-linked (Glycyl lysine isopeptide (Lys-Gly) (interchain with G-Cter in SUMO2)). Lys388 carries the post-translational modification N6-acetyllysine; alternate. Lys388 participates in a covalent cross-link: Glycyl lysine isopeptide (Lys-Gly) (interchain with G-Cter in SUMO2); alternate. Positions 430–439 are enriched in polar residues; sequence WPSVSISTPS. Residues 441–450 show a composition bias toward acidic residues; it reads EPLEGTEDSE. Composition is skewed to basic and acidic residues over residues 451–466 and 477–489; these read DRSV…KEDA and RWND…ELNK. Residues 504-513 are compositionally biased toward low complexity; that stretch reads ATTATAAADA.

The protein belongs to the ETS family.

Its subcellular location is the nucleus. In terms of biological role, transcriptional repressor that contribute to growth arrest during terminal macrophage differentiation by repressing target genes involved in Ras-dependent proliferation. Represses MMP1 promoter activity. The sequence is that of ETS translocation variant 3 (Etv3) from Mus musculus (Mouse).